A 241-amino-acid polypeptide reads, in one-letter code: DNA repair protein RecO (241 aa).

Belongs to the RecO family.

In terms of biological role, involved in DNA repair and RecF pathway recombination. The protein is DNA repair protein RecO of Orientia tsutsugamushi (strain Boryong) (Rickettsia tsutsugamushi).